A 447-amino-acid chain; its full sequence is BAG family molecular chaperone regulator 5 (447 aa).

BAG domains follow at residues 9–86, 95–167, 182–260, 275–350, and 365–442; these read SISR…EQNA, QNIF…EDCM, SVAK…DLEE, SIIK…DLKE, and PHKA…DMKS.

Binds to the ATPase domain of HSP/HSP70 chaperones. Binds PRKN. Interacts with HSPA8. Interacts with JPH2.

In terms of biological role, co-chaperone for HSP/HSP70 proteins. It functions as a nucleotide-exchange factor promoting the release of ADP from HSP70, thereby activating HSP70-mediated protein refolding. Has an essential role in maintaining proteostasis at junctional membrane complexes (JMC), where it may function as a scaffold between the HSPA8 chaperone and JMC proteins enabling correct, HSPA8-dependent JMC protein folding. Inhibits both auto-ubiquitination of PRKN and ubiquitination of target proteins by PRKN. The chain is BAG family molecular chaperone regulator 5 (Bag5) from Mus musculus (Mouse).